Consider the following 238-residue polypeptide: Probable transcriptional regulatory protein MGAS2096_Spy0287 (238 aa).

The protein belongs to the TACO1 family. YeeN subfamily.

It is found in the cytoplasm. The protein is Probable transcriptional regulatory protein MGAS2096_Spy0287 of Streptococcus pyogenes serotype M12 (strain MGAS2096).